The chain runs to 159 residues: SsrA-binding protein (159 aa).

It belongs to the SmpB family.

Its subcellular location is the cytoplasm. Functionally, required for rescue of stalled ribosomes mediated by trans-translation. Binds to transfer-messenger RNA (tmRNA), required for stable association of tmRNA with ribosomes. tmRNA and SmpB together mimic tRNA shape, replacing the anticodon stem-loop with SmpB. tmRNA is encoded by the ssrA gene; the 2 termini fold to resemble tRNA(Ala) and it encodes a 'tag peptide', a short internal open reading frame. During trans-translation Ala-aminoacylated tmRNA acts like a tRNA, entering the A-site of stalled ribosomes, displacing the stalled mRNA. The ribosome then switches to translate the ORF on the tmRNA; the nascent peptide is terminated with the 'tag peptide' encoded by the tmRNA and targeted for degradation. The ribosome is freed to recommence translation, which seems to be the essential function of trans-translation. This is SsrA-binding protein from Actinobacillus pleuropneumoniae serotype 5b (strain L20).